We begin with the raw amino-acid sequence, 182 residues long: uncharacterized protein (182 aa).

Residues 151–172 form a disordered region; it reads RGPGKPFADEKPCPRERPPADQ. Positions 157 to 169 are enriched in basic and acidic residues; sequence FADEKPCPRERPP.

This is an uncharacterized protein from Mycobacterium tuberculosis (strain CDC 1551 / Oshkosh).